Reading from the N-terminus, the 115-residue chain is Protein V2 (115 aa).

This sequence belongs to the geminiviridae protein AV2/V2 family. In terms of assembly, interacts with host SGS3.

It localises to the host cytoplasm. The protein localises to the host perinuclear region. Its function is as follows. Through its interaction with host SGS3, acts as a suppressor of RNA-mediated gene silencing, also known as post-transcriptional gene silencing (PTGS), a mechanism of plant viral defense that limits the accumulation of viral RNAs. The polypeptide is Protein V2 (Tomato yellow leaf curl Sardinia virus (TYLCSV)).